The sequence spans 266 residues: Putative carbamate hydrolase RutD (266 aa).

The region spanning 15-128 is the AB hydrolase-1 domain; the sequence is AVLLSSGLGG…NAHSARCFDA (114 aa).

The protein belongs to the AB hydrolase superfamily. Hydrolase RutD family.

It catalyses the reaction carbamate + 2 H(+) = NH4(+) + CO2. In terms of biological role, involved in pyrimidine catabolism. May facilitate the hydrolysis of carbamate, a reaction that can also occur spontaneously. This is Putative carbamate hydrolase RutD from Variovorax paradoxus (strain S110).